The primary structure comprises 504 residues: MSQYVIAIDQGTTSSRAIIFDHDGNIVSTGQLEHEQIFPKAGWVEHNATEIWNNTREVIGTALSKANLTRHDIAAVGITNQRETAVVWDKTTGEPVYNAIVWQDTRTQSIVDELAVGGGVERFKDKVGLPLATYFSGTKIKWILDNVDGARERAAAGDLLFGNTDSWVTWNLTGGVDGGVHITDVTNASRTMFMDLATLSWDQEILDAFGVPASMLPTIKSSSEVYGTVHTSQLLREVPVAGILGDQQAATFGQAAFNTGEAKNTYGTGCFLIFNTGEEIVHSKNGLLTTVGYKLGDAPTHYALEGSIAVAGSLIQWLRDTLGMISSAPEVEELAASVEDNGGVYIVPAFSGLFAPYWRSDARGAIVGMTRYVNRNHIARAALEATAFQTREVLDAVNADSGVPLTELKVDGGMVANDALMQFQADILGVPVIRPKVTETTALGAAYAAGLAVGFWNDLGELSSNWAEDKRWEPAMEEDERARQLRLWKKAVTKSMDWVDEDVR.

T12 contacts ADP. 3 residues coordinate ATP: T12, T13, and S14. T12 contributes to the sn-glycerol 3-phosphate binding site. R16 serves as a coordination point for ADP. Sn-glycerol 3-phosphate-binding residues include R82, E83, Y134, and D246. 5 residues coordinate glycerol: R82, E83, Y134, D246, and Q247. Positions 268 and 312 each coordinate ADP. T268, G312, Q316, and G413 together coordinate ATP. Residues G413 and N417 each coordinate ADP.

It belongs to the FGGY kinase family.

It catalyses the reaction glycerol + ATP = sn-glycerol 3-phosphate + ADP + H(+). Its pathway is polyol metabolism; glycerol degradation via glycerol kinase pathway; sn-glycerol 3-phosphate from glycerol: step 1/1. Inhibited by fructose 1,6-bisphosphate (FBP). Its function is as follows. Key enzyme in the regulation of glycerol uptake and metabolism. Catalyzes the phosphorylation of glycerol to yield sn-glycerol 3-phosphate. This chain is Glycerol kinase, found in Renibacterium salmoninarum (strain ATCC 33209 / DSM 20767 / JCM 11484 / NBRC 15589 / NCIMB 2235).